Consider the following 500-residue polypeptide: NAD(P)H-quinone oxidoreductase chain 4, chloroplastic (500 aa).

The next 14 helical transmembrane spans lie at 4–24 (FPWL…IFFL), 35–55 (YTIC…CYHF), 87–107 (LGPV…AWPV), 113–130 (LFHF…GSFS), 134–154 (LLLF…LLSM), 167–187 (FILY…GVGL), 207–227 (VALE…KLPI), 242–262 (HYST…YGLI), 272–292 (AHSI…IYAA), 305–325 (IAYS…SITD), 330–350 (GAIL…FLAG), 386–406 (LALP…GIIT), 416–436 (IAIT…LLSM), and 462–482 (LFVS…PDFV).

The protein belongs to the complex I subunit 4 family.

It is found in the plastid. The protein resides in the chloroplast thylakoid membrane. It carries out the reaction a plastoquinone + NADH + (n+1) H(+)(in) = a plastoquinol + NAD(+) + n H(+)(out). The enzyme catalyses a plastoquinone + NADPH + (n+1) H(+)(in) = a plastoquinol + NADP(+) + n H(+)(out). This Helianthus annuus (Common sunflower) protein is NAD(P)H-quinone oxidoreductase chain 4, chloroplastic.